Reading from the N-terminus, the 341-residue chain is Protein DOWNY MILDEW RESISTANCE 6 (341 aa).

In terms of domain architecture, Fe2OG dioxygenase spans 188-288 (QGQHMAVNYY…RLSVASFLCP (101 aa)). Positions 212, 214, and 269 each coordinate Fe cation. R279 lines the 2-oxoglutarate pocket.

This sequence belongs to the iron/ascorbate-dependent oxidoreductase family. Fe(2+) serves as cofactor.

The enzyme catalyses salicylate + NADH + O2 + H(+) = 2,3-dihydroxybenzoate + NAD(+) + H2O. Functionally, converts salicylic acid (SA) to 2,3-dihydroxybenzoic acid (2,3-DHBA). Suppressor of immunity. Regulates negatively defense associated genes expression (e.g. PR-1, PR-2, and PR-5). Negative regulator of defense against Hyaloperonospora arabidopsidis. (Microbial infection) Required for susceptibility to the downy mildew pathogen Hyaloperonospora arabidopsidis. Its function is as follows. (Microbial infection) Required for susceptibility to Pseudomonas syringae pv. tomato DC3000. In terms of biological role, (Microbial infection) Required for susceptibility to the oomycete Phytophthora capsici. The polypeptide is Protein DOWNY MILDEW RESISTANCE 6 (Arabidopsis thaliana (Mouse-ear cress)).